The chain runs to 83 residues: MACKVKAELEAAFKKLDANGDGYVTALELQTFMVTLDAYKALSKDKVKEASAKLIKMADKNSDGKISKEEFLNANAELLCQLK.

2 EF-hand domains span residues 4–39 and 46–81; these read KVKA…LDAY and KVKE…LLCQ. Ca(2+)-binding residues include Asp17, Asn19, Asp21, Tyr23, Glu28, Asp59, Asn61, Asp63, Lys65, and Glu70.

Selectively expressed in a small group of neurons.

It localises to the cytoplasm. Functionally, may function as a trigger protein which interacts with a larger protein. May mediate calcium-dependent signal transduction events in the growth cones and axons of a small group of sensory neurons which fasciculate in a single axon tract. The protein is Calsensin of Haemopis marmorata (Green horse leech).